The primary structure comprises 345 residues: tRNA-specific 2-thiouridylase MnmA 1 (345 aa).

ATP contacts are provided by residues 9 to 16 and Leu-35; that span reads GMSGGIDS. Cys-96 serves as the catalytic Nucleophile. A disulfide bridge connects residues Cys-96 and Cys-191. An ATP-binding site is contributed by Gly-120. Residues 138–140 form an interaction with tRNA region; the sequence is KDQ. Residue Cys-191 is the Cysteine persulfide intermediate of the active site. Positions 293 to 294 are interaction with tRNA; that stretch reads RY.

The protein belongs to the MnmA/TRMU family.

It is found in the cytoplasm. It carries out the reaction S-sulfanyl-L-cysteinyl-[protein] + uridine(34) in tRNA + AH2 + ATP = 2-thiouridine(34) in tRNA + L-cysteinyl-[protein] + A + AMP + diphosphate + H(+). Catalyzes the 2-thiolation of uridine at the wobble position (U34) of tRNA, leading to the formation of s(2)U34. This is tRNA-specific 2-thiouridylase MnmA 1 from Aliarcobacter butzleri (strain RM4018) (Arcobacter butzleri).